We begin with the raw amino-acid sequence, 274 residues long: Large ribosomal subunit protein uL2 (274 aa).

A disordered region spans residues 224-256 (VMNPVDHPHGGGEGKTGEGRHPVDPWGNLTKGY). The segment covering 229-246 (DHPHGGGEGKTGEGRHPV) has biased composition (basic and acidic residues).

The protein belongs to the universal ribosomal protein uL2 family. In terms of assembly, part of the 50S ribosomal subunit. Forms a bridge to the 30S subunit in the 70S ribosome.

In terms of biological role, one of the primary rRNA binding proteins. Required for association of the 30S and 50S subunits to form the 70S ribosome, for tRNA binding and peptide bond formation. It has been suggested to have peptidyltransferase activity; this is somewhat controversial. Makes several contacts with the 16S rRNA in the 70S ribosome. The chain is Large ribosomal subunit protein uL2 from Polaromonas naphthalenivorans (strain CJ2).